The following is a 477-amino-acid chain: Probable malate:quinone oxidoreductase (477 aa).

The protein belongs to the MQO family. FAD is required as a cofactor.

The catalysed reaction is (S)-malate + a quinone = a quinol + oxaloacetate. The protein operates within carbohydrate metabolism; tricarboxylic acid cycle; oxaloacetate from (S)-malate (quinone route): step 1/1. This is Probable malate:quinone oxidoreductase from Synechococcus sp. (strain RCC307).